A 357-amino-acid chain; its full sequence is Chorismate synthase (357 aa).

Arg48 and Arg54 together coordinate NADP(+). Residues 125–127 (RSS), 243–244 (NA), Gly283, 298–302 (KPTSS), and Arg324 each bind FMN.

Belongs to the chorismate synthase family. Homotetramer. FMNH2 serves as cofactor.

It catalyses the reaction 5-O-(1-carboxyvinyl)-3-phosphoshikimate = chorismate + phosphate. The protein operates within metabolic intermediate biosynthesis; chorismate biosynthesis; chorismate from D-erythrose 4-phosphate and phosphoenolpyruvate: step 7/7. Catalyzes the anti-1,4-elimination of the C-3 phosphate and the C-6 proR hydrogen from 5-enolpyruvylshikimate-3-phosphate (EPSP) to yield chorismate, which is the branch point compound that serves as the starting substrate for the three terminal pathways of aromatic amino acid biosynthesis. This reaction introduces a second double bond into the aromatic ring system. The polypeptide is Chorismate synthase (Pasteurella multocida (strain Pm70)).